A 371-amino-acid chain; its full sequence is UDP-N-acetylglucosamine--N-acetylmuramyl-(pentapeptide) pyrophosphoryl-undecaprenol N-acetylglucosamine transferase (371 aa).

UDP-N-acetyl-alpha-D-glucosamine contacts are provided by residues 10 to 12 (TGG), Asn124, Arg166, Ser196, and Gln301.

This sequence belongs to the glycosyltransferase 28 family. MurG subfamily.

It localises to the cell membrane. The catalysed reaction is di-trans,octa-cis-undecaprenyl diphospho-N-acetyl-alpha-D-muramoyl-L-alanyl-D-glutamyl-meso-2,6-diaminopimeloyl-D-alanyl-D-alanine + UDP-N-acetyl-alpha-D-glucosamine = di-trans,octa-cis-undecaprenyl diphospho-[N-acetyl-alpha-D-glucosaminyl-(1-&gt;4)]-N-acetyl-alpha-D-muramoyl-L-alanyl-D-glutamyl-meso-2,6-diaminopimeloyl-D-alanyl-D-alanine + UDP + H(+). Its pathway is cell wall biogenesis; peptidoglycan biosynthesis. Its function is as follows. Cell wall formation. Catalyzes the transfer of a GlcNAc subunit on undecaprenyl-pyrophosphoryl-MurNAc-pentapeptide (lipid intermediate I) to form undecaprenyl-pyrophosphoryl-MurNAc-(pentapeptide)GlcNAc (lipid intermediate II). The protein is UDP-N-acetylglucosamine--N-acetylmuramyl-(pentapeptide) pyrophosphoryl-undecaprenol N-acetylglucosamine transferase of Moorella thermoacetica (strain ATCC 39073 / JCM 9320).